A 465-amino-acid polypeptide reads, in one-letter code: Phosphomannomutase/phosphoglucomutase (465 aa).

The Phosphoserine intermediate role is filled by S110. Positions 110, 244, 246, and 248 each coordinate Mg(2+). Substrate contacts are provided by E327, S329, and H331.

The protein belongs to the phosphohexose mutase family. Monomer. Mg(2+) is required as a cofactor.

The enzyme catalyses alpha-D-mannose 1-phosphate = D-mannose 6-phosphate. It catalyses the reaction alpha-D-glucose 1-phosphate = alpha-D-glucose 6-phosphate. The protein operates within nucleotide-sugar biosynthesis; GDP-alpha-D-mannose biosynthesis; alpha-D-mannose 1-phosphate from D-fructose 6-phosphate: step 2/2. Its pathway is bacterial outer membrane biogenesis; lipopolysaccharide biosynthesis. In terms of biological role, the phosphomannomutase activity produces a precursor for alginate polymerization. The alginate layer causes a mucoid phenotype and provides a protective barrier against host immune defenses and antibiotics. Also involved in core-LPS biosynthesis due to its phosphoglucomutase activity. Essential for biofilm production. This Pseudomonas syringae pv. tomato (strain ATCC BAA-871 / DC3000) protein is Phosphomannomutase/phosphoglucomutase (algC).